Consider the following 101-residue polypeptide: Putative pterin-4-alpha-carbinolamine dehydratase (101 aa).

This sequence belongs to the pterin-4-alpha-carbinolamine dehydratase family.

It catalyses the reaction (4aS,6R)-4a-hydroxy-L-erythro-5,6,7,8-tetrahydrobiopterin = (6R)-L-erythro-6,7-dihydrobiopterin + H2O. This Streptomyces coelicolor (strain ATCC BAA-471 / A3(2) / M145) protein is Putative pterin-4-alpha-carbinolamine dehydratase.